The following is a 190-amino-acid chain: ATP synthase subunit delta (190 aa).

This sequence belongs to the ATPase delta chain family. As to quaternary structure, F-type ATPases have 2 components, F(1) - the catalytic core - and F(0) - the membrane proton channel. F(1) has five subunits: alpha(3), beta(3), gamma(1), delta(1), epsilon(1). F(0) has three main subunits: a(1), b(2) and c(10-14). The alpha and beta chains form an alternating ring which encloses part of the gamma chain. F(1) is attached to F(0) by a central stalk formed by the gamma and epsilon chains, while a peripheral stalk is formed by the delta and b chains.

It localises to the cell inner membrane. Its function is as follows. F(1)F(0) ATP synthase produces ATP from ADP in the presence of a proton or sodium gradient. F-type ATPases consist of two structural domains, F(1) containing the extramembraneous catalytic core and F(0) containing the membrane proton channel, linked together by a central stalk and a peripheral stalk. During catalysis, ATP synthesis in the catalytic domain of F(1) is coupled via a rotary mechanism of the central stalk subunits to proton translocation. This protein is part of the stalk that links CF(0) to CF(1). It either transmits conformational changes from CF(0) to CF(1) or is implicated in proton conduction. In Methylobacterium radiotolerans (strain ATCC 27329 / DSM 1819 / JCM 2831 / NBRC 15690 / NCIMB 10815 / 0-1), this protein is ATP synthase subunit delta.